The chain runs to 373 residues: Leucine aminopeptidase 1 (373 aa).

The first 18 residues, 1 to 18, serve as a signal peptide directing secretion; the sequence is MKLLSVLALSATASSVLG. Residues 19 to 75 constitute a propeptide that is removed on maturation; it reads ASIPVDTRAEKFLIELAPGETRWVTEEEKWALKESGQDFFDITDEEVGFTAAVAQPA. Zn(2+) contacts are provided by H176 and D195. A glycan (N-linked (GlcNAc...) asparagine) is linked at N196. 2 residues coordinate Zn(2+): E234 and D261. N288 carries N-linked (GlcNAc...) asparagine glycosylation. Cysteines 310 and 314 form a disulfide. H343 contacts Zn(2+). The N-linked (GlcNAc...) asparagine glycan is linked to N348.

It belongs to the peptidase M28 family. M28E subfamily. Monomer. Requires Zn(2+) as cofactor.

The protein localises to the secreted. Its function is as follows. Extracellular aminopeptidase that allows assimilation of proteinaceous substrates. This Arthroderma gypseum (strain ATCC MYA-4604 / CBS 118893) (Microsporum gypseum) protein is Leucine aminopeptidase 1 (LAP1).